We begin with the raw amino-acid sequence, 226 residues long: ATP synthase F(0) complex subunit a (226 aa).

6 helical membrane passes run Phe6 to Phe26, Trp68 to Leu88, Gln97 to Phe117, Ile138 to Val158, Ile164 to Ile184, and Ala189 to Ile209.

The protein belongs to the ATPase A chain family. Component of the ATP synthase complex composed at least of ATP5F1A/subunit alpha, ATP5F1B/subunit beta, ATP5MC1/subunit c (homooctomer), MT-ATP6/subunit a, MT-ATP8/subunit 8, ATP5ME/subunit e, ATP5MF/subunit f, ATP5MG/subunit g, ATP5MK/subunit k, ATP5MJ/subunit j, ATP5F1C/subunit gamma, ATP5F1D/subunit delta, ATP5F1E/subunit epsilon, ATP5PF/subunit F6, ATP5PB/subunit b, ATP5PD/subunit d, ATP5PO/subunit OSCP. ATP synthase complex consists of a soluble F(1) head domain (subunits alpha(3) and beta(3)) - the catalytic core - and a membrane F(0) domain - the membrane proton channel (subunits c, a, 8, e, f, g, k and j). These two domains are linked by a central stalk (subunits gamma, delta, and epsilon) rotating inside the F1 region and a stationary peripheral stalk (subunits F6, b, d, and OSCP). Interacts with DNAJC30; interaction is direct.

The protein localises to the mitochondrion inner membrane. It catalyses the reaction H(+)(in) = H(+)(out). Its function is as follows. Subunit a, of the mitochondrial membrane ATP synthase complex (F(1)F(0) ATP synthase or Complex V) that produces ATP from ADP in the presence of a proton gradient across the membrane which is generated by electron transport complexes of the respiratory chain. ATP synthase complex consist of a soluble F(1) head domain - the catalytic core - and a membrane F(1) domain - the membrane proton channel. These two domains are linked by a central stalk rotating inside the F(1) region and a stationary peripheral stalk. During catalysis, ATP synthesis in the catalytic domain of F(1) is coupled via a rotary mechanism of the central stalk subunits to proton translocation. With the subunit c (ATP5MC1), forms the proton-conducting channel in the F(0) domain, that contains two crucial half-channels (inlet and outlet) that facilitate proton movement from the mitochondrial intermembrane space (IMS) into the matrix. Protons are taken up via the inlet half-channel and released through the outlet half-channel, following a Grotthuss mechanism. The sequence is that of ATP synthase F(0) complex subunit a from Rattus norvegicus (Rat).